The sequence spans 702 residues: Putative endo-beta-N-acetylglucosaminidase (702 aa).

A signal peptide spans 1–23; it reads MKKVRFIFLALLFFLASPEGAMA. 15 Cell wall-binding repeats span residues 42 to 63, 65 to 84, 86 to 105, 124 to 145, 147 to 166, 185 to 206, 208 to 227, 229 to 248, 250 to 271, 273 to 292, 294 to 315, 317 to 336, 338 to 359, 361 to 380, and 382 to 403; these read ANEW…DANY, ENEW…GGYM, KSEW…DGKM, IEDW…DGQH, EKEW…GGYL, QQGW…NGNY, DKEW…GGYM, ANEW…DGKI, EKEW…GGYM, and ANEW…DGKM.

It belongs to the glycosyl hydrolase 73 family.

The protein localises to the secreted. It catalyses the reaction an N(4)-(oligosaccharide-(1-&gt;3)-[oligosaccharide-(1-&gt;6)]-beta-D-Man-(1-&gt;4)-beta-D-GlcNAc-(1-&gt;4)-alpha-D-GlcNAc)-L-asparaginyl-[protein] + H2O = an oligosaccharide-(1-&gt;3)-[oligosaccharide-(1-&gt;6)]-beta-D-Man-(1-&gt;4)-D-GlcNAc + N(4)-(N-acetyl-beta-D-glucosaminyl)-L-asparaginyl-[protein]. In terms of biological role, plays an important role in cell wall degradation and cell separation. This is Putative endo-beta-N-acetylglucosaminidase (lytB) from Streptococcus pneumoniae (strain ATCC BAA-255 / R6).